The sequence spans 249 residues: uncharacterized protein (249 aa).

Positions 1-43 are cleaved as a signal peptide; sequence MRRGRSRPAGAAPAALLLPLLLLLPLTGCDRLAAAPAEHAAAA. Positions 40–59 are disordered; that stretch reads AAAAGDPAQDADRGRRLPPV. One can recognise a NodB homology domain in the interval 68–243; sequence PVVFLTYDDG…TIEEQGLRVG (176 aa).

This is an uncharacterized protein from Streptomyces coelicolor (strain ATCC BAA-471 / A3(2) / M145).